We begin with the raw amino-acid sequence, 374 residues long: Queuine tRNA-ribosyltransferase (374 aa).

Asp-89 (proton acceptor) is an active-site residue. Substrate contacts are provided by residues 89–93, Asp-143, Gln-187, and Gly-214; that span reads DSGGF. The segment at 245-251 is RNA binding; it reads GVGKPED. Catalysis depends on Asp-264, which acts as the Nucleophile. The segment at 269-273 is RNA binding; important for wobble base 34 recognition; that stretch reads TRNAR. Zn(2+) contacts are provided by Cys-302, Cys-304, Cys-307, and His-333.

The protein belongs to the queuine tRNA-ribosyltransferase family. As to quaternary structure, homodimer. Within each dimer, one monomer is responsible for RNA recognition and catalysis, while the other monomer binds to the replacement base PreQ1. The cofactor is Zn(2+).

The catalysed reaction is 7-aminomethyl-7-carbaguanine + guanosine(34) in tRNA = 7-aminomethyl-7-carbaguanosine(34) in tRNA + guanine. Its pathway is tRNA modification; tRNA-queuosine biosynthesis. Catalyzes the base-exchange of a guanine (G) residue with the queuine precursor 7-aminomethyl-7-deazaguanine (PreQ1) at position 34 (anticodon wobble position) in tRNAs with GU(N) anticodons (tRNA-Asp, -Asn, -His and -Tyr). Catalysis occurs through a double-displacement mechanism. The nucleophile active site attacks the C1' of nucleotide 34 to detach the guanine base from the RNA, forming a covalent enzyme-RNA intermediate. The proton acceptor active site deprotonates the incoming PreQ1, allowing a nucleophilic attack on the C1' of the ribose to form the product. After dissociation, two additional enzymatic reactions on the tRNA convert PreQ1 to queuine (Q), resulting in the hypermodified nucleoside queuosine (7-(((4,5-cis-dihydroxy-2-cyclopenten-1-yl)amino)methyl)-7-deazaguanosine). In Serratia proteamaculans (strain 568), this protein is Queuine tRNA-ribosyltransferase.